A 190-amino-acid polypeptide reads, in one-letter code: Xanthine phosphoribosyltransferase (190 aa).

The xanthine site is built by Leu-20 and Asn-27. 129–133 (ASGSA) serves as a coordination point for 5-phospho-alpha-D-ribose 1-diphosphate. A xanthine-binding site is contributed by Lys-157.

The protein belongs to the purine/pyrimidine phosphoribosyltransferase family. Xpt subfamily. Homodimer.

The protein resides in the cytoplasm. It carries out the reaction XMP + diphosphate = xanthine + 5-phospho-alpha-D-ribose 1-diphosphate. It participates in purine metabolism; XMP biosynthesis via salvage pathway; XMP from xanthine: step 1/1. In terms of biological role, converts the preformed base xanthine, a product of nucleic acid breakdown, to xanthosine 5'-monophosphate (XMP), so it can be reused for RNA or DNA synthesis. This is Xanthine phosphoribosyltransferase from Clostridium tetani (strain Massachusetts / E88).